A 366-amino-acid chain; its full sequence is Anhydro-N-acetylmuramic acid kinase (366 aa).

12-19 (GTSMDGAD) lines the ATP pocket.

Belongs to the anhydro-N-acetylmuramic acid kinase family.

The enzyme catalyses 1,6-anhydro-N-acetyl-beta-muramate + ATP + H2O = N-acetyl-D-muramate 6-phosphate + ADP + H(+). It functions in the pathway amino-sugar metabolism; 1,6-anhydro-N-acetylmuramate degradation. It participates in cell wall biogenesis; peptidoglycan recycling. Functionally, catalyzes the specific phosphorylation of 1,6-anhydro-N-acetylmuramic acid (anhMurNAc) with the simultaneous cleavage of the 1,6-anhydro ring, generating MurNAc-6-P. Is required for the utilization of anhMurNAc either imported from the medium or derived from its own cell wall murein, and thus plays a role in cell wall recycling. The protein is Anhydro-N-acetylmuramic acid kinase of Neisseria meningitidis serogroup C (strain 053442).